We begin with the raw amino-acid sequence, 149 residues long: UPF0260 protein PFL_1499 (149 aa).

Belongs to the UPF0260 family.

This chain is UPF0260 protein PFL_1499, found in Pseudomonas fluorescens (strain ATCC BAA-477 / NRRL B-23932 / Pf-5).